The chain runs to 231 residues: Transcriptional regulatory protein KdpE (231 aa).

The Response regulatory domain maps to 4 to 117 (KILIIEDDHA…ELRARIRVIE (114 aa)). D53 bears the 4-aspartylphosphate mark. A DNA-binding region (ompR/PhoB-type) is located at residues 127–227 (NIVFTNGLLS…HPRIGYQMLQ (101 aa)).

Phosphorylated by KdpD. Phosphorylation is required for transcriptional activity.

Its function is as follows. Member of the two-component regulatory system KdpD/KdpE that regulates the transcription of a series of virulence factors through sensing external K(+) concentrations. Also regulates capsular polysaccharide synthesis. Upon phosphorylation by KpdD, functions as a transcriptional regulator by direct binding to promoter regions of target genes including spa, hla, aur and geh. Represses the transcription of kdpFABC operon. The chain is Transcriptional regulatory protein KdpE from Staphylococcus aureus (strain NCTC 8325 / PS 47).